Consider the following 85-residue polypeptide: CDC42 small effector protein homolog (85 aa).

2 S-palmitoyl cysteine lipidation sites follow: Cys-14 and Cys-15. The 14-residue stretch at 37–50 (IGNPTNFVHTGHIG) folds into the CRIB domain. Residues Ser-78 and Ser-81 each carry the phosphoserine modification.

The protein belongs to the CDC42SE/SPEC family.

The protein resides in the cytoplasm. Its subcellular location is the cytoskeleton. It is found in the cell membrane. Its function is as follows. Probably involved in the organization of the actin cytoskeleton by acting downstream of CDC42, inducing actin filament assembly. This Drosophila melanogaster (Fruit fly) protein is CDC42 small effector protein homolog (Spec2).